A 339-amino-acid chain; its full sequence is Protein H339R (339 aa).

It belongs to the asfivirus H339R family. In terms of assembly, interacts with NACA (alpha chain of nascent polypeptide-associated complex).

It is found in the host cytoplasm. The protein localises to the host nucleus. It localises to the virion. In Ornithodoros (relapsing fever ticks), this protein is Protein H339R.